Reading from the N-terminus, the 534-residue chain is Cargo protein 2 (534 aa).

In terms of assembly, homododecamer. Localizes inside the capsid.

It localises to the virion. Its function is as follows. Protein that is stored in high quantity in the viral capsid and may play a role during ejection. This chain is Cargo protein 2, found in Bacteroides intestinalis (Bacteroides phage PhiCrAss001).